Here is a 381-residue protein sequence, read N- to C-terminus: DnaJ-related protein spj1 (381 aa).

Residues 5-74 (NFSQKQILGV…RKIYDAYGEE (70 aa)) form the J domain. Positions 72 to 93 (GEEGLNGQPGGPGGGPGEGFPG) are disordered. Gly residues predominate over residues 78 to 93 (GQPGGPGGGPGEGFPG). The CR-type zinc finger occupies 138-225 (GGSFTLEIPV…CKGERVAEVV (88 aa)). CXXCXGXG motif repeat units follow at residues 151–158 (CSVCSGQG), 172–179 (CPVCGGSG), 199–206 (CNACNGNG), and 213–220 (CPRCKGER). The Prevents secretion from ER motif lies at 378–381 (FDEL).

It is found in the endoplasmic reticulum. The polypeptide is DnaJ-related protein spj1 (spj1) (Schizosaccharomyces pombe (strain 972 / ATCC 24843) (Fission yeast)).